Reading from the N-terminus, the 464-residue chain is Argininosuccinate lyase (464 aa).

Belongs to the lyase 1 family. Argininosuccinate lyase subfamily.

The protein resides in the cytoplasm. The catalysed reaction is 2-(N(omega)-L-arginino)succinate = fumarate + L-arginine. It functions in the pathway amino-acid biosynthesis; L-arginine biosynthesis; L-arginine from L-ornithine and carbamoyl phosphate: step 3/3. The polypeptide is Argininosuccinate lyase (Moorella thermoacetica (strain ATCC 39073 / JCM 9320)).